The following is a 434-amino-acid chain: Serine hydroxymethyltransferase (434 aa).

Residues leucine 133 and 137–139 (GHL) contribute to the (6S)-5,6,7,8-tetrahydrofolate site. Position 242 is an N6-(pyridoxal phosphate)lysine (lysine 242).

The protein belongs to the SHMT family. Homodimer. Requires pyridoxal 5'-phosphate as cofactor.

Its subcellular location is the cytoplasm. It carries out the reaction (6R)-5,10-methylene-5,6,7,8-tetrahydrofolate + glycine + H2O = (6S)-5,6,7,8-tetrahydrofolate + L-serine. It participates in one-carbon metabolism; tetrahydrofolate interconversion. It functions in the pathway amino-acid biosynthesis; glycine biosynthesis; glycine from L-serine: step 1/1. Functionally, catalyzes the reversible interconversion of serine and glycine with tetrahydrofolate (THF) serving as the one-carbon carrier. This reaction serves as the major source of one-carbon groups required for the biosynthesis of purines, thymidylate, methionine, and other important biomolecules. Also exhibits THF-independent aldolase activity toward beta-hydroxyamino acids, producing glycine and aldehydes, via a retro-aldol mechanism. This is Serine hydroxymethyltransferase from Hyphomicrobium methylovorum.